Here is a 4544-residue protein sequence, read N- to C-terminus: Prolow-density lipoprotein receptor-related protein 1 (4544 aa).

Positions 1 to 19 are cleaved as a signal peptide; sequence MLTPPLLLLLPLLSALVAA. The Extracellular portion of the chain corresponds to 20 to 4419; the sequence is AIDAPKTCSP…EHVFSQQQPG (4400 aa). LDL-receptor class A domains follow at residues 25-66 and 70-110; these read KTCS…ICPQ and QRCQ…HCRE. 6 disulfide bridges follow: C27–C40, C34–C53, C47–C64, C72–C85, C79–C98, and C92–C108. Residues 111–149 enclose the EGF-like 1 domain; the sequence is LQGNCSRLGCQHHCVPTLDGPTCYCNSSFQLQADGKTCK. N114 is a glycosylation site (N-linked (GlcNAc...) asparagine). 6 cysteine pairs are disulfide-bonded: C115–C124, C120–C133, C135–C148, C154–C164, C160–C173, and C175–C188. N136 carries N-linked (GlcNAc...) asparagine glycosylation. An EGF-like 2; calcium-binding domain is found at 150 to 189; it reads DFDECSVYGTCSQLCTNTDGSFICGCVEGYLLQPDNRSCK. N-linked (GlcNAc...) asparagine glycosylation is found at N185, N239, and N274. LDL-receptor class B repeat units lie at residues 292–334, 335–378, and 379–422; these read GNFY…DPAM, GKVF…DLVS, and RLVY…FENY. N357 carries an N-linked (GlcNAc...) asparagine glycan. N-linked (GlcNAc...) asparagine glycosylation occurs at N446. In terms of domain architecture, EGF-like 3 spans 474 to 520; that stretch reads RSHACENDQYGKPGGCSDICLLANSHKARTCRCRSGFSLGSDGKSCK. 3 disulfides stabilise this stretch: C478–C493, C489–C504, and C506–C519. LDL-receptor class B repeat units follow at residues 571 to 613, 614 to 659, 660 to 710, and 711 to 754; these read GFIY…DWMG, DNLY…DPLN, GWMY…DIPA, and GRLY…HGNY. An N-linked (GlcNAc...) (complex) asparagine glycan is attached at N729. In terms of domain architecture, EGF-like 4 spans 803–843; that stretch reads GTNKCRVNNGGCSSLCLATPGSRQCACAEDQVLDADGVTCL. 33 cysteine pairs are disulfide-bonded: C807–C818, C814–C827, C829–C842, C854–C866, C861–C879, C873–C890, C895–C907, C902–C920, C914–C931, C936–C948, C943–C961, C955–C971, C976–C989, C984–C1002, C996–C1011, C1015–C1027, C1022–C1040, C1034–C1051, C1062–C1075, C1069–C1088, C1082–C1097, C1104–C1118, C1112–C1131, C1125–C1140, C1145–C1159, C1152–C1172, C1166–C1182, C1185–C1196, C1192–C1206, C1208–C1221, C1227–C1237, C1233–C1246, and C1248–C1261. LDL-receptor class A domains lie at 852 to 892, 893 to 933, 934 to 973, 974 to 1013, 1013 to 1053, 1060 to 1099, 1102 to 1142, and 1143 to 1182; these read PQCQ…LCHQ, HTCP…TCSA, RTCP…SCAY, PTCF…GCSH, HSCS…NCTN, GGCH…SCEG, HVCD…NCES, and LACR…GELC. 6 residues coordinate Ca(2+): W871, D874, D876, D878, D884, and E885. An N-linked (GlcNAc...) asparagine glycan is attached at N928. W1032, D1035, D1037, D1039, D1045, and E1046 together coordinate Ca(2+). N1050 is a glycosylation site (N-linked (GlcNAc...) asparagine). Ca(2+) contacts are provided by W1080, D1083, D1085, D1087, D1093, and E1094. 2 N-linked (GlcNAc...) asparagine glycosylation sites follow: N1154 and N1155. 2 consecutive EGF-like domains span residues 1183–1222 and 1223–1262; these read DQCS…HTCQ and IQSY…ESCR. N1195 and N1218 each carry an N-linked (GlcNAc...) asparagine glycan. 5 LDL-receptor class B repeats span residues 1309-1355, 1356-1398, 1399-1445, 1446-1490, and 1491-1531; these read SALY…DWIA, GNIY…DPRD, GILF…DYLE, KRIL…YGGE, and VYWT…YHPS. The N-linked (GlcNAc...) (complex) asparagine glycan is linked to N1511. The region spanning 1536–1579 is the EGF-like 7 domain; sequence APNPCEANGGQGPCSHLCLINYNRTVSCACPHLMKLHKDNTTCY. 3 disulfide bridges follow: C1540–C1553, C1549–C1563, and C1565–C1578. 4 N-linked (GlcNAc...) asparagine glycosylation sites follow: N1558, N1575, N1616, and N1645. LDL-receptor class B repeat units follow at residues 1627-1669, 1670-1713, 1714-1753, and 1754-1798; these read QRVY…DWVS, RNLF…HPLR, GKLY…DFPE, and SKLY…MGDK. Residues N1723, N1733, N1763, and N1825 are each glycosylated (N-linked (GlcNAc...) asparagine). Residues 1846 to 1887 form the EGF-like 8 domain; sequence GTNPCSVNNGDCSQLCLPTSETTRSCMCTAGYSLRSGQQACE. Disulfide bonds link C1850-C1861, C1857-C1871, and C1873-C1886. The N-linked (GlcNAc...) asparagine glycan is linked to N1933. 4 LDL-receptor class B repeats span residues 1934-1976, 1977-2019, 2020-2063, and 2064-2107; these read DTIY…DWIA, GNIY…HPEK, GYLF…DYQD, and GKLY…FEDF. Residue N1995 is glycosylated (N-linked (GlcNAc...) asparagine). Position 2009 is an N6-acetyllysine (K2009). The N-linked (GlcNAc...) asparagine glycan is linked to N2048. N-linked (GlcNAc...) asparagine glycosylation is found at N2117 and N2127. The EGF-like 9 domain maps to 2155–2195; sequence GTNVCAVANGGCQQLCLYRGRGQRACACAHGMLAEDGASCR. 3 disulfide bridges follow: C2159–C2170, C2166–C2180, and C2182–C2194. LDL-receptor class B repeat units follow at residues 2253-2294, 2295-2343, 2344-2388, 2389-2431, and 2432-2473; these read NRIF…HRGW, DTLY…DECQ, NLMF…DHRA, EKLY…YGEH, and IFWT…VAND. N2472 is a glycosylation site (N-linked (GlcNAc...) asparagine). An EGF-like 10 domain is found at 2478-2518; it reads ELSPCRINNGGCQDLCLLTHQGHVNCSCRGGRILQDDLTCR. Disulfide bonds link C2482–C2493, C2489–C2503, and C2505–C2517. N2502 is a glycosylation site (N-linked (GlcNAc...) asparagine). N2521 carries an N-linked (GlcNAc...) asparagine glycan. 7 LDL-receptor class A domains span residues 2522–2563, 2564–2602, 2603–2641, 2642–2690, 2694–2732, 2732–2771, and 2772–2814; these read SSCR…YCNS, RRCK…PCNK, TACG…NCSA, TDCS…DCPG, PRCP…HCNK, KFCS…HCEG, and KTCG…GCLY. 6 disulfide bridges follow: C2524/C2537, C2532/C2550, C2544/C2561, C2566/C2578, C2573/C2591, and C2585/C2600. N2539 is a glycosylation site (N-linked (GlcNAc...) asparagine). N-linked (GlcNAc...) asparagine glycosylation is present at N2601. 15 disulfide bridges follow: C2605–C2617, C2612–C2630, C2624–C2639, C2644–C2666, C2660–C2679, C2673–C2688, C2696–C2708, C2703–C2721, C2715–C2730, C2734–C2746, C2741–C2759, C2753–C2769, C2774–C2787, C2781–C2800, and C2794–C2812. N-linked (GlcNAc...) asparagine glycans are attached at residues N2620 and N2638. N-linked (GlcNAc...) asparagine glycosylation occurs at N2815. LDL-receptor class A domains lie at 2816–2855, 2856–2899, and 2902–2940; these read STCD…ECEY, PTCG…HCTS, and HKCN…RGCH. Intrachain disulfides connect C2818–C2830, C2825–C2843, C2837–C2853, C2858–C2870, C2865–C2884, C2878–C2897, C2904–C2917, C2912–C2930, C2924–C2939, C2944–C2956, C2952–C2965, C2967–C2980, C2986–C2996, C2992–C3005, and C3007–C3021. N2905 is a glycosylation site (N-linked (GlcNAc...) asparagine). Positions 2941–2981 constitute an EGF-like 11 domain; it reads INECLSRKLSGCSQDCEDLKIGFKCRCRPGFRLKDDGRTCA. One can recognise an EGF-like 12; calcium-binding domain in the interval 2982–3022; that stretch reads DVDECSTTFPCSQRCINTHGSYKCLCVEGYAPRGGDPHSCK. 2 N-linked (GlcNAc...) asparagine glycosylation sites follow: N3048 and N3089. LDL-receptor class B repeat units lie at residues 3069–3113, 3114–3156, 3157–3200, 3201–3243, and 3244–3284; these read QMIY…DWVG, GNLY…DVQN, GYLY…DYVT, ERIY…FEDY, and VYWT…FHAL. N3264 carries an N-linked (GlcNAc...) asparagine glycan. Positions 3290–3331 constitute an EGF-like 13 domain; sequence PNHPCKVNNGGCSNLCLLSPGGGHKCACPTNFYLGSDGRTCV. 3 disulfides stabilise this stretch: C3294–C3305, C3301–C3315, and C3317–C3330. LDL-receptor class A domains lie at 3332 to 3371, 3372 to 3410, 3411 to 3450, 3451 to 3491, 3492 to 3533, 3534 to 3572, 3573 to 3611, 3611 to 3649, 3652 to 3692, 3693 to 3733, and 3739 to 3778; these read SNCT…DCPE, FKCR…NCDI, HVCL…DCPE, VTCA…NCTQ, MTCG…ECDE, RTCE…SCTP, RPCS…DCTP, PRCD…ACGT, RTCP…ECAR, FVCP…DCEP, and THCK…DCSI. Residue N3333 is glycosylated (N-linked (GlcNAc...) asparagine). 39 cysteine pairs are disulfide-bonded: C3334–C3346, C3341–C3359, C3353–C3369, C3374–C3386, C3381–C3399, C3393–C3408, C3413–C3426, C3420–C3439, C3433–C3448, C3453–C3466, C3460–C3479, C3473–C3489, C3494–C3507, C3501–C3520, C3514–C3531, C3536–C3548, C3543–C3561, C3555–C3570, C3575–C3587, C3582–C3600, C3594–C3609, C3613–C3625, C3620–C3638, C3632–C3647, C3654–C3666, C3661–C3679, C3673–C3690, C3695–C3709, C3703–C3722, C3716–C3731, C3741–C3754, C3749–C3767, C3761–C3776, C3785–C3798, C3792–C3807, C3809–C3822, C3828–C3838, C3834–C3847, and C3849–C3860. The N-linked (GlcNAc...) asparagine glycan is linked to N3488. Residue N3662 is glycosylated (N-linked (GlcNAc...) asparagine). 2 consecutive EGF-like domains span residues 3781–3823 and 3824–3861; these read KLTS…PGCQ and DINE…NTCK. N-linked (GlcNAc...) asparagine glycosylation occurs at N3788. N-linked (GlcNAc...) asparagine glycosylation occurs at N3839. 4 LDL-receptor class B repeats span residues 3912 to 3954, 3970 to 4012, 4013 to 4056, and 4057 to 4101; these read GRVY…HLNI, GNVY…DPLR, GTMY…DYHN, and ERLY…FEDY. A Recognition site for proteolytical processing motif is present at residues 3940–3943; sequence RHRR. Residue N3953 is glycosylated (N-linked (GlcNAc...) asparagine). N-linked (GlcNAc...) asparagine glycans are attached at residues N4075 and N4125. 7 EGF-like domains span residues 4147–4183, 4196–4232, 4232–4268, 4268–4304, 4304–4340, 4340–4375, and 4373–4409; these read VTNP…GTCV, RPGT…DKCE, ELDQ…PKCT, TQQV…DRCQ, QYRQ…SRCE, EVNK…PSCL, and SCLT…PRCE. 17 disulfides stabilise this stretch: C4151–C4160, C4156–C4169, C4171–C4182, C4200–C4210, C4204–C4220, C4222–C4231, C4236–C4246, C4240–C4256, C4258–C4267, C4272–C4282, C4276–C4292, C4294–C4303, C4308–C4318, C4312–C4328, C4330–C4339, C4344–C4352, and C4347–C4363. N-linked (GlcNAc...) asparagine glycosylation occurs at N4179. N-linked (GlcNAc...) asparagine glycosylation is found at N4278 and N4279. N4364 carries an N-linked (GlcNAc...) asparagine glycan. 4 disulfides stabilise this stretch: C4365–C4374, C4377–C4387, C4381–C4397, and C4399–C4408. The chain crosses the membrane as a helical span at residues 4420-4444; it reads HIASILIPLLLLLLLVLVAGVVFWY. Topologically, residues 4445–4544 are cytoplasmic; sequence KRRVQGAKGF…PEDEIGDPLA (100 aa). The interval 4445–4544 is interaction with MAFB; that stretch reads KRRVQGAKGF…PEDEIGDPLA (100 aa). At T4460 the chain carries Phosphothreonine. The short motif at 4502–4507 is the NPXY motif element; the sequence is FTNPVY. Y4507 is modified (phosphotyrosine). 3 positions are modified to phosphoserine: S4517, S4520, and S4523.

It belongs to the LDLR family. Heterodimer of an 85-kDa membrane-bound carboxyl subunit and a non-covalently attached 515-kDa N-terminal subunit. Intracellular domain interacts with MAFB. Found in a complex with PID1/PCLI1, LRP1 and CUBNI. Interacts with SNX17, PID1/PCLI1, PDGF and CUBN. The intracellular domain interacts with SHC1, GULP1 and DAB1. Can weakly interact (via NPXY motif) with DAB2 (via PID domain); the interaction is enhanced by tyrosine phosphorylation of the NPXY motif. Interacts with MDK; promotes neuronal survival. Interacts with LRPAP1; this interaction is followed by rapid internalization. Interacts with uPA/PLAU and PAI1/SERPINE1, either individually or in complex with each other, leading to rapid endocytosis; this interaction is abolished in the presence of LRPAP1/RAP. Also interacts with tPA/PLAT alone or in complex with SERPINE1. Interacts with the urokinase receptor PLAUR; this interaction leads to PLAUR internalization and is impaired in the presence of SORL1. Interacts with PDGFB. Interacts with TAU/MAPT, leading to endocytosis; this interaction is reduced in the presence of LRPAP1/RAP. Interacts with IGFBP3; this interaction mediates cell growth inhibition independently of IGF1. Interacts with ADGRG6. In terms of assembly, (Microbial infection) Interacts with bacterial exotoxins. As to quaternary structure, (Microbial infection) Interacts with Rift valley fever virus (RVFV) glycoprotein N; this interaction facilitates virus entry. Post-translationally, cleaved into a 85 kDa membrane-spanning subunit (LRP-85) and a 515 kDa large extracellular domain (LRP-515) that remains non-covalently associated. Gamma-secretase-dependent cleavage of LRP-85 releases the intracellular domain from the membrane. The N-terminus is blocked. In terms of processing, phosphorylated on serine and threonine residues. Post-translationally, phosphorylated on tyrosine residues upon stimulation with PDGF. Tyrosine phosphorylation promotes interaction with SHC1. Most abundant in liver, brain and lung.

Its subcellular location is the cell membrane. It localises to the membrane. The protein resides in the coated pit. It is found in the cytoplasm. The protein localises to the nucleus. Its subcellular location is the golgi outpost. It localises to the cytoskeleton. The protein resides in the microtubule organizing center. Its function is as follows. Endocytic receptor involved in endocytosis and in phagocytosis of apoptotic cells. Required for early embryonic development. Involved in cellular lipid homeostasis. Involved in the plasma clearance of chylomicron remnants and activated LRPAP1 (alpha 2-macroglobulin), as well as the local metabolism of complexes between plasminogen activators and their endogenous inhibitors. Acts as an LRPAP1 alpha-2-macroglobulin receptor. Acts as TAU/MAPT receptor and controls the endocytosis of TAU/MAPT as well as its subsequent spread. May modulate cellular events, such as APP metabolism, kinase-dependent intracellular signaling, neuronal calcium signaling as well as neurotransmission. Also acts as a receptor for IGFBP3 to mediate cell growth inhibition. Functionally, (Microbial infection) Functions as a receptor for Pseudomonas aeruginosa exotoxin A. This is Prolow-density lipoprotein receptor-related protein 1 from Homo sapiens (Human).